The sequence spans 276 residues: 4-hydroxy-3-methylbut-2-enyl diphosphate reductase (276 aa).

Cys12 is a [4Fe-4S] cluster binding site. 2 residues coordinate (2E)-4-hydroxy-3-methylbut-2-enyl diphosphate: His36 and His70. His36 and His70 together coordinate dimethylallyl diphosphate. Isopentenyl diphosphate-binding residues include His36 and His70. Cys92 contributes to the [4Fe-4S] cluster binding site. His120 contributes to the (2E)-4-hydroxy-3-methylbut-2-enyl diphosphate binding site. His120 is a dimethylallyl diphosphate binding site. His120 contributes to the isopentenyl diphosphate binding site. Glu122 (proton donor) is an active-site residue. Residue Thr158 coordinates (2E)-4-hydroxy-3-methylbut-2-enyl diphosphate. Residue Cys186 participates in [4Fe-4S] cluster binding. 4 residues coordinate (2E)-4-hydroxy-3-methylbut-2-enyl diphosphate: Ser214, Ser215, Asn216, and Ser258. Ser214, Ser215, Asn216, and Ser258 together coordinate dimethylallyl diphosphate. 4 residues coordinate isopentenyl diphosphate: Ser214, Ser215, Asn216, and Ser258.

The protein belongs to the IspH family. [4Fe-4S] cluster is required as a cofactor.

The catalysed reaction is isopentenyl diphosphate + 2 oxidized [2Fe-2S]-[ferredoxin] + H2O = (2E)-4-hydroxy-3-methylbut-2-enyl diphosphate + 2 reduced [2Fe-2S]-[ferredoxin] + 2 H(+). It carries out the reaction dimethylallyl diphosphate + 2 oxidized [2Fe-2S]-[ferredoxin] + H2O = (2E)-4-hydroxy-3-methylbut-2-enyl diphosphate + 2 reduced [2Fe-2S]-[ferredoxin] + 2 H(+). Its pathway is isoprenoid biosynthesis; dimethylallyl diphosphate biosynthesis; dimethylallyl diphosphate from (2E)-4-hydroxy-3-methylbutenyl diphosphate: step 1/1. The protein operates within isoprenoid biosynthesis; isopentenyl diphosphate biosynthesis via DXP pathway; isopentenyl diphosphate from 1-deoxy-D-xylulose 5-phosphate: step 6/6. In terms of biological role, catalyzes the conversion of 1-hydroxy-2-methyl-2-(E)-butenyl 4-diphosphate (HMBPP) into a mixture of isopentenyl diphosphate (IPP) and dimethylallyl diphosphate (DMAPP). Acts in the terminal step of the DOXP/MEP pathway for isoprenoid precursor biosynthesis. This chain is 4-hydroxy-3-methylbut-2-enyl diphosphate reductase, found in Wolinella succinogenes (strain ATCC 29543 / DSM 1740 / CCUG 13145 / JCM 31913 / LMG 7466 / NCTC 11488 / FDC 602W) (Vibrio succinogenes).